The chain runs to 350 residues: Protein-glutamate methylesterase/protein-glutamine glutaminase (350 aa).

A Response regulatory domain is found at 5 to 122 (TVLCVDDSAL…REGMLAYSEL (118 aa)). Asp-56 carries the 4-aspartylphosphate modification. Residues 153 to 345 (LLSSEKLIAV…KRMLAKISSG (193 aa)) enclose the CheB-type methylesterase domain. Active-site residues include Ser-165, His-191, and Asp-287.

The protein belongs to the CheB family. Post-translationally, phosphorylated by CheA. Phosphorylation of the N-terminal regulatory domain activates the methylesterase activity.

The protein resides in the cytoplasm. It carries out the reaction [protein]-L-glutamate 5-O-methyl ester + H2O = L-glutamyl-[protein] + methanol + H(+). It catalyses the reaction L-glutaminyl-[protein] + H2O = L-glutamyl-[protein] + NH4(+). Functionally, involved in chemotaxis. Part of a chemotaxis signal transduction system that modulates chemotaxis in response to various stimuli. Catalyzes the demethylation of specific methylglutamate residues introduced into the chemoreceptors (methyl-accepting chemotaxis proteins or MCP) by CheR. Also mediates the irreversible deamidation of specific glutamine residues to glutamic acid. The chain is Protein-glutamate methylesterase/protein-glutamine glutaminase from Photorhabdus laumondii subsp. laumondii (strain DSM 15139 / CIP 105565 / TT01) (Photorhabdus luminescens subsp. laumondii).